The chain runs to 306 residues: Methionyl-tRNA formyltransferase (306 aa).

A (6S)-5,6,7,8-tetrahydrofolate-binding site is contributed by 110-113; it reads SLLP.

This sequence belongs to the Fmt family.

The enzyme catalyses L-methionyl-tRNA(fMet) + (6R)-10-formyltetrahydrofolate = N-formyl-L-methionyl-tRNA(fMet) + (6S)-5,6,7,8-tetrahydrofolate + H(+). Functionally, attaches a formyl group to the free amino group of methionyl-tRNA(fMet). The formyl group appears to play a dual role in the initiator identity of N-formylmethionyl-tRNA by promoting its recognition by IF2 and preventing the misappropriation of this tRNA by the elongation apparatus. The chain is Methionyl-tRNA formyltransferase from Brucella suis (strain ATCC 23445 / NCTC 10510).